The following is a 411-amino-acid chain: Putative polysaccharide ligase RC0486 (411 aa).

Helical transmembrane passes span 15 to 35 (LGMLAGLSAAATVTIFLLISF), 78 to 98 (GITMLFTAWCFISCLFAIHLI), 101 to 121 (LATFTQVFILLFLGFAVSNSA), 133 to 153 (LIFGILTAILLFFIEYSSNGF), 166 to 186 (MLDRGCALLSITAWVAIIILL), 207 to 227 (ISDSLASFLGFGIGGVIFILT), 233 to 253 (IFFKLIAISLITGSLLFPVIA), 328 to 348 (ILQITLELGIIGLILFLCLVY), 361 to 381 (NFKAISYACFINYYIIGMISY), and 383 to 403 (IWQIWWISSGIWVLVLMKLLV).

Belongs to the O-antigen ligase family.

It is found in the membrane. The chain is Putative polysaccharide ligase RC0486 from Rickettsia conorii (strain ATCC VR-613 / Malish 7).